A 340-amino-acid chain; its full sequence is uncharacterized protein (340 aa).

One can recognise a Radical SAM core domain in the interval 58-307 (AALPFRYTVN…PSYREMLRER (250 aa)). 3 residues coordinate [4Fe-4S] cluster: cysteine 72, cysteine 76, and cysteine 79. Transmembrane regions (helical) follow at residues 140-160 (YALMPGIIGALAASGTPLSIL) and 243-263 (QLLGQIAAAGATGVTVFGLHL).

It depends on [4Fe-4S] cluster as a cofactor.

It is found in the cell membrane. This is an uncharacterized protein from Mycobacterium tuberculosis (strain CDC 1551 / Oshkosh).